We begin with the raw amino-acid sequence, 706 residues long: 1,4-alpha-glucan-branching enzyme (706 aa).

(1,4-alpha-D-glucosyl)n contacts are provided by tryptophan 96 and lysine 133. Aspartate 358 serves as the catalytic Nucleophile. The active-site Proton donor is glutamate 419.

It belongs to the glycosyl hydrolase 13 family. GlgB subfamily. In terms of assembly, monomer.

Its subcellular location is the cytoplasm. The enzyme catalyses Transfers a segment of a (1-&gt;4)-alpha-D-glucan chain to a primary hydroxy group in a similar glucan chain.. Its pathway is glycan biosynthesis; glycogen biosynthesis. Its function is as follows. Glycogen-branching enzyme participates in the glycogen biosynthetic process along with glycogenin and glycogen synthase. Generates alpha-1,6-glucosidic branches from alpha-1,4-linked glucose chains, to increase solubility of the glycogen polymer. The sequence is that of 1,4-alpha-glucan-branching enzyme (GLC3) from Candida glabrata (strain ATCC 2001 / BCRC 20586 / JCM 3761 / NBRC 0622 / NRRL Y-65 / CBS 138) (Yeast).